Reading from the N-terminus, the 1342-residue chain is DNA-directed RNA polymerase subunit beta (1342 aa).

Belongs to the RNA polymerase beta chain family. As to quaternary structure, the RNAP catalytic core consists of 2 alpha, 1 beta, 1 beta' and 1 omega subunit. When a sigma factor is associated with the core the holoenzyme is formed, which can initiate transcription.

It carries out the reaction RNA(n) + a ribonucleoside 5'-triphosphate = RNA(n+1) + diphosphate. In terms of biological role, DNA-dependent RNA polymerase catalyzes the transcription of DNA into RNA using the four ribonucleoside triphosphates as substrates. The polypeptide is DNA-directed RNA polymerase subunit beta (Erwinia tasmaniensis (strain DSM 17950 / CFBP 7177 / CIP 109463 / NCPPB 4357 / Et1/99)).